Reading from the N-terminus, the 388-residue chain is Beta-hexosaminidase LpqI (388 aa).

The signal sequence occupies residues 1–19 (MAFPRTLAILAAAAALVVA). C20 is lipidated: N-palmitoyl cysteine. Residue C20 is the site of S-diacylglycerol cysteine attachment. Residues D123, R131, R193, and 223–224 (KH) contribute to the substrate site. H236 serves as the catalytic Proton donor/acceptor. D311 functions as the Nucleophile in the catalytic mechanism.

This sequence belongs to the glycosyl hydrolase 3 family.

The protein localises to the cell inner membrane. It catalyses the reaction Hydrolysis of terminal non-reducing N-acetyl-D-hexosamine residues in N-acetyl-beta-D-hexosaminides.. It participates in cell wall biogenesis; peptidoglycan recycling. Functionally, plays a role in peptidoglycan recycling by cleaving the terminal beta-1,4-linked N-acetylglucosamine (GlcNAc) from peptidoglycan fragments. Acts as a regulator for GlcNAc-MurNAc levels by cleaving disaccharides and allowing the breakdown of MurNAc. The chain is Beta-hexosaminidase LpqI from Mycobacterium bovis (strain BCG / Pasteur 1173P2).